The sequence spans 474 residues: Citrate synthase 4, mitochondrial (474 aa).

A mitochondrion-targeting transit peptide spans 1–16; it reads MVFFRSVSAFTRLRSR. Catalysis depends on residues His308, His354, and Asp409.

This sequence belongs to the citrate synthase family. Homodimer.

It is found in the mitochondrion matrix. It catalyses the reaction oxaloacetate + acetyl-CoA + H2O = citrate + CoA + H(+). Its pathway is carbohydrate metabolism; tricarboxylic acid cycle; isocitrate from oxaloacetate: step 1/2. The chain is Citrate synthase 4, mitochondrial (CSY4) from Arabidopsis thaliana (Mouse-ear cress).